The primary structure comprises 106 residues: MGKTNDWLDFDQLAEEKVRDALKPPSMYKVILVNDDYTPMEFVIDVLQKFFSYDVERATQLMLAVHYQGKAICGVFTAEVAETKVAMVNKYARENEHPLLCTLEKA.

Belongs to the ClpS family. Binds to the N-terminal domain of the chaperone ClpA.

Its function is as follows. Involved in the modulation of the specificity of the ClpAP-mediated ATP-dependent protein degradation. The chain is ATP-dependent Clp protease adapter protein ClpS from Escherichia coli O139:H28 (strain E24377A / ETEC).